The chain runs to 344 residues: UDP-N-acetylglucosamine transporter UGNT1 (344 aa).

Residues methionine 1–lysine 23 form a disordered region. Helical transmembrane passes span tyrosine 41–leucine 61, phenylalanine 66–alanine 86, isoleucine 92–valine 112, threonine 114–alanine 134, tyrosine 167–alanine 187, phenylalanine 194–isoleucine 214, phenylalanine 226–isoleucine 246, phenylalanine 264–leucine 284, and phenylalanine 304–isoleucine 324.

Belongs to the TPT transporter family. UGnT (TC 2.A.7.15) subfamily. Expressed in roots, leaves, stems, flowers and siliques.

It is found in the golgi apparatus membrane. Its function is as follows. Mediates the transport of UDP-N-acetylglucosamine (UDP-GlcNAc) across the Golgi apparatus membrane. Delivers an essential substrate for the maturation of N-glycans and the GlcNAc-containing glycosyl inositol phosphorylceramide (GIPC) class of sphingolipids in the Golgi apparatus. This chain is UDP-N-acetylglucosamine transporter UGNT1, found in Arabidopsis thaliana (Mouse-ear cress).